A 400-amino-acid polypeptide reads, in one-letter code: AA13 family lytic polysaccharide monooxygenase A (400 aa).

The signal sequence occupies residues 1-17 (MLLTVLAVVGCFTAVNG). Histidine 18 is a binding site for Cu(2+). Residue histidine 18 is modified to Methylhistidine. The 230-residue stretch at 18 to 247 (HGYLTIPASR…AQVYLHCADI (230 aa)) folds into the Chitin-binding type-4 domain. Cystine bridges form between cysteine 39-cysteine 42, cysteine 65-cysteine 244, cysteine 101-cysteine 202, cysteine 117-cysteine 144, cysteine 152-cysteine 160, cysteine 166-cysteine 172, and cysteine 180-cysteine 191. Histidine 108 is a binding site for Cu(2+). Asparagine 119 carries an N-linked (GlcNAc...) asparagine glycan. Tyrosine 241 lines the Cu(2+) pocket. Positions 254–287 (GGTTSKSTTSTTSTTSTSRSTSTSAPTTTSSAST) are disordered. Positions 257 to 287 (TSKSTTSTTSTTSTSRSTSTSAPTTTSSAST) are enriched in low complexity. The region spanning 293 to 400 (TTQASLIPVT…TTATAAASWR (108 aa)) is the CBM20 domain. Asparagine 379 carries N-linked (GlcNAc...) asparagine glycosylation.

Belongs to the polysaccharide monooxygenase AA13 family. Cu(2+) serves as cofactor. Post-translationally, O-mannosylated.

Its subcellular location is the secreted. The enzyme catalyses starch + reduced acceptor + O2 = D-glucono-1,5-lactone-terminated malto-oligosaccharides + short-chain malto-oligosaccharides + acceptor + H2O.. Its activity is regulated as follows. Activity is inhibited by both beta-cyclodextrin or amylose that block the access to the active site. Functionally, starch-active lytic polysaccharide monooxygenase that oxidizes the C1 position of starch substrates. Catalysis by LPMOs requires the reduction of the active-site copper from Cu(II) to Cu(I) by a reducing agent and H(2)O(2) or O(2) as a cosubstrate. This Aspergillus terreus (strain NIH 2624 / FGSC A1156) protein is AA13 family lytic polysaccharide monooxygenase A.